The chain runs to 614 residues: DBH-like monooxygenase protein 1 homolog (614 aa).

A signal peptide spans 1–22; sequence MSENKLFCAIVFLTSLFCSTCS. Residues 23-593 are Lumenal-facing; the sequence is QGTRFVHSAA…CRKDSAIQCE (571 aa). The 114-residue stretch at 37 to 150 folds into the DOMON domain; sequence RRYNIKWGFD…STVRVIWAFH (114 aa). An N-linked (GlcNAc...) asparagine glycan is attached at Asn116. Tyr205 is a catalytic residue. Intrachain disulfides connect Cys207/Cys259 and Cys244/Cys271. Cu cation contacts are provided by His237 and His238. Asn249 carries N-linked (GlcNAc...) asparagine glycosylation. Residues His309, His391, and His393 each contribute to the Cu cation site. 3 disulfides stabilise this stretch: Cys366/Cys482, Cys370/Cys552, and Cys445/Cys467. His391 is an active-site residue. Asn454 carries an N-linked (GlcNAc...) asparagine glycan. Position 466 (Met466) interacts with Cu cation. Asn519 carries N-linked (GlcNAc...) asparagine glycosylation. A helical transmembrane segment spans residues 594 to 612; it reads HSLALLLTACLLLILQTCL.

This sequence belongs to the copper type II ascorbate-dependent monooxygenase family. Requires Cu(2+) as cofactor.

The protein localises to the endoplasmic reticulum membrane. This is DBH-like monooxygenase protein 1 homolog (moxd1) from Danio rerio (Zebrafish).